The primary structure comprises 188 residues: Phosphatidylcholine-sterol acyltransferase (188 aa).

N-linked (GlcNAc...) asparagine glycosylation occurs at asparagine 20. Histidine 169 (charge relay system) is an active-site residue.

This sequence belongs to the AB hydrolase superfamily. Lipase family. As to expression, detected in blood plasma (at protein level).

It is found in the secreted. It carries out the reaction a sterol + a 1,2-diacyl-sn-glycero-3-phosphocholine = a sterol ester + a 1-acyl-sn-glycero-3-phosphocholine. The catalysed reaction is a 1-O-alkyl-2-acetyl-sn-glycero-3-phosphocholine + H2O = a 1-O-alkyl-sn-glycero-3-phosphocholine + acetate + H(+). The enzyme catalyses a 1-hexadecanoyl-2-acyl-sn-glycero-3-phosphocholine + (24S)-hydroxycholesterol = (24S)-24-hydroxycholesterol ester + 1-hexadecanoyl-sn-glycero-3-phosphocholine. It catalyses the reaction (24S)-hydroxycholesterol + 1-hexadecanoyl-2-(9Z,12Z-octadecadienoyl)-sn-glycero-3-phosphocholine = (24S)-hydroxycholesterol 3-linoleoate + 1-hexadecanoyl-sn-glycero-3-phosphocholine. It carries out the reaction 1-hexadecanoyl-2-(5Z,8Z,11Z,14Z-eicosatetraenoyl)-sn-glycero-3-phosphocholine + cholesterol = cholesteryl (5Z,8Z,11Z,14Z)-eicosatetraenoate + 1-hexadecanoyl-sn-glycero-3-phosphocholine. The catalysed reaction is 1-hexadecanoyl-2-(9Z-octadecenoyl)-sn-glycero-3-phosphocholine + cholesterol = cholesteryl (9Z-octadecenoate) + 1-hexadecanoyl-sn-glycero-3-phosphocholine. The enzyme catalyses 1-hexadecanoyl-2-(8Z,11Z,14Z-eicosatrienoyl)-sn-glycero-3-phosphocholine + cholesterol = cholesteryl (8Z,11Z,14Z)-eicosatrienoate + 1-hexadecanoyl-sn-glycero-3-phosphocholine. It catalyses the reaction 1-hexadecanoyl-2-(5Z,8Z,11Z-eicosatrienoyl)-sn-glycero-3-phosphocholine + cholesterol = cholesteryl (5Z,8Z,11Z)-eicosatrienoate + 1-hexadecanoyl-sn-glycero-3-phosphocholine. It carries out the reaction 1-hexadecanoyl-2-(5Z,8Z,11Z,14Z,17Z-eicosapentaenoyl)-sn-glycero-3-phosphocholine + cholesterol = (5Z,8Z,11Z,14Z,17Z-eicosapentaenoyl)-cholesterol + 1-hexadecanoyl-sn-glycero-3-phosphocholine. The catalysed reaction is 1-hexadecanoyl-2-(9Z,12Z-octadecadienoyl)-sn-glycero-3-phosphocholine + cholesterol = cholesteryl (9Z,12Z)-octadecadienoate + 1-hexadecanoyl-sn-glycero-3-phosphocholine. The enzyme catalyses 1-hexadecanoyl-2-(6Z,9Z,12Z-octadecatrienoyl)-sn-glycero-3-phosphocholine + cholesterol = (6Z,9Z,12Z-octadecatrienoyl)-cholesterol + 1-hexadecanoyl-sn-glycero-3-phosphocholine. It catalyses the reaction 1-hexadecanoyl-2-(11Z,14Z,17Z-eicosatrienoyl)-sn-glycero-3-phosphocholine + cholesterol = (11Z,14Z,17Z-eicosatrienoyl)-cholesterol + 1-hexadecanoyl-sn-glycero-3-phosphocholine. It carries out the reaction 1-hexadecanoyl-2-(9Z,12Z,15Z-octadecatrienoyl)-sn-glycero-3-phosphocholine + cholesterol = (9Z,12Z,15Z-octadecatrienoyl)-cholesterol + 1-hexadecanoyl-sn-glycero-3-phosphocholine. The catalysed reaction is 1-hexadecanoyl-2-(9Z,12Z-octadecadienoyl)-sn-glycero-3-phosphocholine + H2O = (9Z,12Z)-octadecadienoate + 1-hexadecanoyl-sn-glycero-3-phosphocholine + H(+). The enzyme catalyses 1-hexadecanoyl-2-(5Z,8Z,11Z,14Z-eicosatetraenoyl)-sn-glycero-3-phosphocholine + H2O = 1-hexadecanoyl-sn-glycero-3-phosphocholine + (5Z,8Z,11Z,14Z)-eicosatetraenoate + H(+). It catalyses the reaction a 1-O-alkyl-2-acetyl-sn-glycero-3-phosphocholine + 1-hexadecanoyl-sn-glycero-3-phosphocholine = 1-hexadecanoyl-2-acetyl-sn-glycero-3-phosphocholine + a 1-O-alkyl-sn-glycero-3-phosphocholine. Functionally, central enzyme in the extracellular metabolism of plasma lipoproteins. Synthesized mainly in the liver and secreted into plasma where it converts cholesterol and phosphatidylcholines (lecithins) to cholesteryl esters and lysophosphatidylcholines on the surface of high and low density lipoproteins (HDLs and LDLs). The cholesterol ester is then transported back to the liver. Also produced in the brain by primary astrocytes, and esterifies free cholesterol on nascent APOE-containing lipoproteins secreted from glia and influences cerebral spinal fluid (CSF) APOE- and APOA1 levels. Together with APOE and the cholesterol transporter ABCA1, plays a key role in the maturation of glial-derived, nascent lipoproteins. Required for remodeling high-density lipoprotein particles into their spherical forms. Has a preference for plasma 16:0-18:2 or 18:O-18:2 phosphatidylcholines. Catalyzes the hydrolysis of 1-O-alkyl-2-acetyl-sn-glycero-3-phosphocholine (platelet-activating factor or PAF) to 1-O-alkyl-sn-glycero-3-phosphocholine (lyso-PAF). Also catalyzes the transfer of the acetate group from PAF to 1-hexadecanoyl-sn-glycero-3-phosphocholine forming lyso-PAF. Catalyzes the esterification of (24S)-hydroxycholesterol (24(S)OH-C), also known as cerebrosterol to produce 24(S)OH-C monoesters. The polypeptide is Phosphatidylcholine-sterol acyltransferase (LCAT) (Sus scrofa (Pig)).